Consider the following 192-residue polypeptide: uncharacterized protein (192 aa).

One can recognise a B12-binding domain in the interval 72–192 (GATVLLIVPP…SLVISEFSLV (121 aa)).

This is an uncharacterized protein from Rhodobacter capsulatus (Rhodopseudomonas capsulata).